Consider the following 83-residue polypeptide: uncharacterized protein (83 aa).

The disordered stretch occupies residues 15–36 (RLKNGRGNKTMSESDYNTSDSG). The span at 21–35 (GNKTMSESDYNTSDS) shows a compositional bias: polar residues.

This is an uncharacterized protein from Aedes vexans (Inland floodwater mosquito).